A 90-amino-acid chain; its full sequence is MAVTYEKTFEIEIINELSESVYNRVLNYVLNHELDTKNTRLLEVNLLNQLEVAQEVDLFQQPFEELQAIHEYWRSMNQYSKQILTKEKVA.

This sequence belongs to the epsilon antitoxin family. As to quaternary structure, in the presence of the zeta toxin, forms an inactive PezA(2)PezT(2) heterotetramer.

Antitoxin component of a type II toxin-antitoxin (TA) system. Neutralizes the toxic effect of cognate zeta toxin. Part of a postsegregational killing (PSK) system involved in the killing of plasmid-free cells. Continuous synthesis of the epsilon antitoxin is required to counteract the zeta toxin. This is Antitoxin epsilon from Streptococcus agalactiae.